A 603-amino-acid polypeptide reads, in one-letter code: ATP-dependent RNA helicase MRH4, mitochondrial (603 aa).

A mitochondrion-targeting transit peptide spans 1 to 71 (MISTGLPLFT…GNGAGAGARV (71 aa)). The short motif at 151–158 (VIKPTPVQ) is the Q motif element. The Helicase ATP-binding domain occupies 193-409 (KNEEQKTKIF…LRLFPDQKSL (217 aa)). ATP is bound at residue 206–213 (AETGSGKT). The short motif at 357–360 (DEAD) is the DEAD box element. Positions 443–603 (CLAQAIYAIS…SAIMKGSRIG (161 aa)) constitute a Helicase C-terminal domain.

The protein belongs to the DEAD box helicase family. MRH4 subfamily.

The protein resides in the mitochondrion. The catalysed reaction is ATP + H2O = ADP + phosphate + H(+). ATP-binding RNA helicase involved in mitochondrial RNA metabolism. Required for maintenance of mitochondrial DNA. This is ATP-dependent RNA helicase MRH4, mitochondrial (MRH4) from Lodderomyces elongisporus (strain ATCC 11503 / CBS 2605 / JCM 1781 / NBRC 1676 / NRRL YB-4239) (Yeast).